The primary structure comprises 390 residues: Succinate--CoA ligase [ADP-forming] subunit beta (390 aa).

The region spanning 9–245 (KHLLKKYNIP…TTQEDEHETM (237 aa)) is the ATP-grasp domain. ATP-binding positions include Lys-46, 53–55 (GRG), Glu-99, Ser-102, and Glu-107. 2 residues coordinate Mg(2+): Asn-200 and Asp-214. Substrate is bound by residues Asn-265 and 322-324 (GIV).

Belongs to the succinate/malate CoA ligase beta subunit family. As to quaternary structure, heterotetramer of two alpha and two beta subunits. The cofactor is Mg(2+).

It catalyses the reaction succinate + ATP + CoA = succinyl-CoA + ADP + phosphate. The enzyme catalyses GTP + succinate + CoA = succinyl-CoA + GDP + phosphate. The protein operates within carbohydrate metabolism; tricarboxylic acid cycle; succinate from succinyl-CoA (ligase route): step 1/1. Its function is as follows. Succinyl-CoA synthetase functions in the citric acid cycle (TCA), coupling the hydrolysis of succinyl-CoA to the synthesis of either ATP or GTP and thus represents the only step of substrate-level phosphorylation in the TCA. The beta subunit provides nucleotide specificity of the enzyme and binds the substrate succinate, while the binding sites for coenzyme A and phosphate are found in the alpha subunit. The polypeptide is Succinate--CoA ligase [ADP-forming] subunit beta (Coxiella burnetii (strain RSA 493 / Nine Mile phase I)).